The chain runs to 75 residues: Cytochrome c oxidase subunit 6C (75 aa).

Residues Met1–Gly13 lie on the Mitochondrial matrix side of the membrane. A helical membrane pass occupies residues Leu14 to Arg54. The Mitochondrial intermembrane portion of the chain corresponds to Asn55 to Lys75.

Belongs to the cytochrome c oxidase subunit 6c family. As to quaternary structure, component of the cytochrome c oxidase (complex IV, CIV), a multisubunit enzyme composed of 14 subunits. The complex is composed of a catalytic core of 3 subunits MT-CO1, MT-CO2 and MT-CO3, encoded in the mitochondrial DNA, and 11 supernumerary subunits COX4I, COX5A, COX5B, COX6A, COX6B, COX6C, COX7A, COX7B, COX7C, COX8 and NDUFA4, which are encoded in the nuclear genome. The complex exists as a monomer or a dimer and forms supercomplexes (SCs) in the inner mitochondrial membrane with NADH-ubiquinone oxidoreductase (complex I, CI) and ubiquinol-cytochrome c oxidoreductase (cytochrome b-c1 complex, complex III, CIII), resulting in different assemblies (supercomplex SCI(1)III(2)IV(1) and megacomplex MCI(2)III(2)IV(2)).

The protein resides in the mitochondrion inner membrane. It participates in energy metabolism; oxidative phosphorylation. Functionally, component of the cytochrome c oxidase, the last enzyme in the mitochondrial electron transport chain which drives oxidative phosphorylation. The respiratory chain contains 3 multisubunit complexes succinate dehydrogenase (complex II, CII), ubiquinol-cytochrome c oxidoreductase (cytochrome b-c1 complex, complex III, CIII) and cytochrome c oxidase (complex IV, CIV), that cooperate to transfer electrons derived from NADH and succinate to molecular oxygen, creating an electrochemical gradient over the inner membrane that drives transmembrane transport and the ATP synthase. Cytochrome c oxidase is the component of the respiratory chain that catalyzes the reduction of oxygen to water. Electrons originating from reduced cytochrome c in the intermembrane space (IMS) are transferred via the dinuclear copper A center (CU(A)) of subunit 2 and heme A of subunit 1 to the active site in subunit 1, a binuclear center (BNC) formed by heme A3 and copper B (CU(B)). The BNC reduces molecular oxygen to 2 water molecules using 4 electrons from cytochrome c in the IMS and 4 protons from the mitochondrial matrix. In Nycticebus coucang (Slow loris), this protein is Cytochrome c oxidase subunit 6C (COX6C).